Reading from the N-terminus, the 321-residue chain is Fe-S cluster assembly protein DRE2 (321 aa).

The interval 1-161 (MPAPVPPTAF…STPVTLSGAR (161 aa)) is N-terminal SAM-like domain. The tract at residues 123-168 (PSPSTLAYTSPSAPSLPTVASDPSPAPSSSTPVTLSGARPLQLRRN) is disordered. Low complexity predominate over residues 139–156 (PTVASDPSPAPSSSTPVT). Residues 162-197 (PLQLRRNGDKARKAALWAIDSPLIPDGGKSLLTPAD) form a linker region. Residues C203, C219, C222, and C224 each contribute to the [2Fe-2S] cluster site. Positions 203–224 (CVFPAENGKPVKRRRACKDCTC) are fe-S binding site A. Residues C285, C288, C296, and C299 each coordinate [4Fe-4S] cluster. Short sequence motifs (cx2C motif) lie at residues 285 to 288 (CGSC) and 296 to 299 (CSSC). The fe-S binding site B stretch occupies residues 285 to 299 (CGSCYLGDAFRCSSC).

It belongs to the anamorsin family. As to quaternary structure, monomer. Interacts with TAH18. Interacts with MIA40. The cofactor is [2Fe-2S] cluster. It depends on [4Fe-4S] cluster as a cofactor.

Its subcellular location is the cytoplasm. It is found in the mitochondrion intermembrane space. In terms of biological role, component of the cytosolic iron-sulfur (Fe-S) protein assembly (CIA) machinery required for the maturation of extramitochondrial Fe-S proteins. Part of an electron transfer chain functioning in an early step of cytosolic Fe-S biogenesis, facilitating the de novo assembly of a [4Fe-4S] cluster on the scaffold complex CFD1-NBP35. Electrons are transferred to DRE2 from NADPH via the FAD- and FMN-containing protein TAH18. TAH18-DRE2 are also required for the assembly of the diferric tyrosyl radical cofactor of ribonucleotide reductase (RNR), probably by providing electrons for reduction during radical cofactor maturation in the catalytic small subunit RNR2. The protein is Fe-S cluster assembly protein DRE2 of Cryptococcus neoformans var. neoformans serotype D (strain B-3501A) (Filobasidiella neoformans).